A 209-amino-acid polypeptide reads, in one-letter code: Large ribosomal subunit protein uL3 (209 aa).

The disordered stretch occupies residues 127–152 (SGGPSSHGSKFHRHLGSTGQAATPSR). Positions 143 to 152 (STGQAATPSR) are enriched in polar residues.

This sequence belongs to the universal ribosomal protein uL3 family. In terms of assembly, part of the 50S ribosomal subunit. Forms a cluster with proteins L14 and L19.

Functionally, one of the primary rRNA binding proteins, it binds directly near the 3'-end of the 23S rRNA, where it nucleates assembly of the 50S subunit. In Borrelia hermsii (strain HS1 / DAH), this protein is Large ribosomal subunit protein uL3.